The primary structure comprises 549 residues: YTH domain-containing family protein 1 (549 aa).

Disordered regions lie at residues 29–102 (QAPW…QPNM), 139–165 (GHPP…RQSG), 243–262 (GASG…QQAV), 273–298 (DSTE…AKGP), and 425–458 (REDS…SENK). Residues 49-61 (VVGQTQSSPQYNG) are compositionally biased toward polar residues. Residues 71 to 102 (QGYYMPQQQQQQQQMPQYYGGPMSPSQPQPNM) are compositionally biased toward low complexity. Composition is skewed to polar residues over residues 251–260 (TGPSATTPQQ) and 273–289 (DSTE…TPTA). The YTH domain occupies 307-513 (DRFFVLKSLT…SVGRRLIGLF (207 aa)).

This sequence belongs to the YTHDF family. YTHDF1 subfamily.

Specifically recognizes and binds N6-methyladenosine (m6A)-containing mRNAs, and regulates their stability. M6A is a modification present at internal sites of mRNAs and some non-coding RNAs and plays a role in mRNA stability and processing. Directly interacts with the acid phosphatase APHA mRNA to increase its stability. The polypeptide is YTH domain-containing family protein 1 (Cryphonectria parasitica (strain ATCC 38755 / EP155)).